We begin with the raw amino-acid sequence, 240 residues long: Ribonuclease PH (240 aa).

Phosphate is bound by residues Arg86 and 124–126; that span reads GTR.

The protein belongs to the RNase PH family. As to quaternary structure, homohexameric ring arranged as a trimer of dimers.

It carries out the reaction tRNA(n+1) + phosphate = tRNA(n) + a ribonucleoside 5'-diphosphate. In terms of biological role, phosphorolytic 3'-5' exoribonuclease that plays an important role in tRNA 3'-end maturation. Removes nucleotide residues following the 3'-CCA terminus of tRNAs; can also add nucleotides to the ends of RNA molecules by using nucleoside diphosphates as substrates, but this may not be physiologically important. Probably plays a role in initiation of 16S rRNA degradation (leading to ribosome degradation) during starvation. In Mannheimia succiniciproducens (strain KCTC 0769BP / MBEL55E), this protein is Ribonuclease PH.